A 109-amino-acid polypeptide reads, in one-letter code: Small ribosomal subunit protein bS6 (109 aa).

It belongs to the bacterial ribosomal protein bS6 family.

In terms of biological role, binds together with bS18 to 16S ribosomal RNA. The chain is Small ribosomal subunit protein bS6 from Dehalococcoides mccartyi (strain CBDB1).